Here is a 439-residue protein sequence, read N- to C-terminus: Histidinol dehydrogenase (439 aa).

Residues tyrosine 129, glutamine 193, and asparagine 222 each coordinate NAD(+). Substrate contacts are provided by threonine 245, glutamine 267, and histidine 270. Zn(2+) contacts are provided by glutamine 267 and histidine 270. Catalysis depends on proton acceptor residues glutamate 336 and histidine 337. Substrate-binding residues include histidine 337, aspartate 370, glutamate 424, and histidine 429. Aspartate 370 lines the Zn(2+) pocket. Histidine 429 lines the Zn(2+) pocket.

It belongs to the histidinol dehydrogenase family. Zn(2+) serves as cofactor.

It carries out the reaction L-histidinol + 2 NAD(+) + H2O = L-histidine + 2 NADH + 3 H(+). The protein operates within amino-acid biosynthesis; L-histidine biosynthesis; L-histidine from 5-phospho-alpha-D-ribose 1-diphosphate: step 9/9. In terms of biological role, catalyzes the sequential NAD-dependent oxidations of L-histidinol to L-histidinaldehyde and then to L-histidine. The sequence is that of Histidinol dehydrogenase from Cutibacterium acnes (strain DSM 16379 / KPA171202) (Propionibacterium acnes).